A 317-amino-acid chain; its full sequence is MKLSFILSTLVAGALAYNEFSAPGPNAVLQEGGGVNTVSWSNLTSSTVTLTLYRGGNSALTPIETIASDIDNTGTYLWNIATYYEAADDYLLGLSFDGGETYSQYFTLQACSTCTISTSSLSYSGTISSTSIAPSMIGTRTSSSYFITSSSSTPSSSSSSSSSSPSSSSSKSSSSSKSSSSSSSSSKSSSSSSSSSKSSSSSSSSSKSSASPSSSKSSSKFSSSSFITSTTPASSSSSGAIVSNAKTASTDDSSSASSATSSVSSVVSSASSALSASASSASASVSSSASSDASPALKTGINALVAVGVVSAIALFL.

Residues 1 to 16 (MKLSFILSTLVAGALA) form the signal peptide. Asn42 carries N-linked (GlcNAc...) asparagine glycosylation. 2 stretches are compositionally biased toward low complexity: residues 150–238 (SSST…SSSS) and 247–259 (TAST…ASSA). The segment at 150–259 (SSSTPSSSSS…TDDSSSASSA (110 aa)) is disordered.

This is an uncharacterized protein from Schizosaccharomyces pombe (strain 972 / ATCC 24843) (Fission yeast).